The chain runs to 161 residues: Dihydrofolate reductase (161 aa).

The region spanning threonine 2–arginine 157 is the DHFR domain. Substrate is bound at residue isoleucine 6 to alanine 8. Residues valine 7–alanine 8 and isoleucine 15–glutamine 20 each bind NADP(+). Aspartate 28 provides a ligand contact to substrate. Glycine 44–threonine 47 is an NADP(+) binding site. Arginine 58 provides a ligand contact to substrate. Residues leucine 63–glutamine 66 and phenylalanine 93–leucine 98 each bind NADP(+). Threonine 112 is a substrate binding site.

The protein belongs to the dihydrofolate reductase family.

The catalysed reaction is (6S)-5,6,7,8-tetrahydrofolate + NADP(+) = 7,8-dihydrofolate + NADPH + H(+). It functions in the pathway cofactor biosynthesis; tetrahydrofolate biosynthesis; 5,6,7,8-tetrahydrofolate from 7,8-dihydrofolate: step 1/1. Key enzyme in folate metabolism. Catalyzes an essential reaction for de novo glycine and purine synthesis, and for DNA precursor synthesis. The sequence is that of Dihydrofolate reductase (folA) from Staphylococcus epidermidis.